The sequence spans 140 residues: Nucleoside diphosphate kinase (140 aa).

Residues lysine 11, phenylalanine 59, arginine 87, threonine 93, arginine 104, and asparagine 114 each contribute to the ATP site. Histidine 117 acts as the Pros-phosphohistidine intermediate in catalysis.

This sequence belongs to the NDK family. In terms of assembly, homotetramer. It depends on Mg(2+) as a cofactor.

The protein localises to the cytoplasm. It carries out the reaction a 2'-deoxyribonucleoside 5'-diphosphate + ATP = a 2'-deoxyribonucleoside 5'-triphosphate + ADP. The catalysed reaction is a ribonucleoside 5'-diphosphate + ATP = a ribonucleoside 5'-triphosphate + ADP. Major role in the synthesis of nucleoside triphosphates other than ATP. The ATP gamma phosphate is transferred to the NDP beta phosphate via a ping-pong mechanism, using a phosphorylated active-site intermediate. The sequence is that of Nucleoside diphosphate kinase from Bradyrhizobium sp. (strain ORS 278).